The sequence spans 334 residues: MTIRLAINGFGRIGRNVLRALYTGHYREQLQVVAINDLGDAAVNAHLFQYDSVHGHFPGEVEHDAESLRVMGDRIAVSAIRNPAELPWKSLGVDIVLECTGLFTSRDKAAAHLQAGAGKVLISAPGKDVEATVVYGVNHEVLRASHRIVSNASCTTNCLAPVAQVLHRELGIEHGLMTTIHAYTNDQNLSDVYHPDLYRARSATQSMIPTKTGAAEAVGLVLPELAGKLTGLAVRVPVINVSLVDLTVQVARDTSVDEVNRLLREASEGSPVLGYNTQPLVSVDFNHDPRSSIFDANHTKVSGRLVKAMAWYDNEWGFSNRMLDSALALAAARD.

NAD(+) is bound by residues 12-13, D37, R81, and S123; that span reads RI. D-glyceraldehyde 3-phosphate is bound by residues 153-155 and T184; that span reads SCT. Residue C154 is the Nucleophile of the active site. N185 contributes to the NAD(+) binding site. D-glyceraldehyde 3-phosphate contacts are provided by residues R199, 212 to 213, and R235; that span reads TG. NAD(+) is bound at residue N314.

Belongs to the glyceraldehyde-3-phosphate dehydrogenase family. In terms of assembly, homotetramer.

The protein localises to the cytoplasm. The enzyme catalyses D-glyceraldehyde 3-phosphate + phosphate + NAD(+) = (2R)-3-phospho-glyceroyl phosphate + NADH + H(+). The protein operates within carbohydrate degradation; glycolysis; pyruvate from D-glyceraldehyde 3-phosphate: step 1/5. Catalyzes the oxidative phosphorylation of glyceraldehyde 3-phosphate (G3P) to 1,3-bisphosphoglycerate (BPG) using the cofactor NAD. The first reaction step involves the formation of a hemiacetal intermediate between G3P and a cysteine residue, and this hemiacetal intermediate is then oxidized to a thioester, with concomitant reduction of NAD to NADH. The reduced NADH is then exchanged with the second NAD, and the thioester is attacked by a nucleophilic inorganic phosphate to produce BPG. This Pseudomonas aeruginosa (strain ATCC 15692 / DSM 22644 / CIP 104116 / JCM 14847 / LMG 12228 / 1C / PRS 101 / PAO1) protein is Glyceraldehyde-3-phosphate dehydrogenase (gap).